The chain runs to 101 residues: Urease subunit beta (101 aa).

This sequence belongs to the urease beta subunit family. In terms of assembly, heterotrimer of UreA (gamma), UreB (beta) and UreC (alpha) subunits. Three heterotrimers associate to form the active enzyme.

Its subcellular location is the cytoplasm. It catalyses the reaction urea + 2 H2O + H(+) = hydrogencarbonate + 2 NH4(+). It participates in nitrogen metabolism; urea degradation; CO(2) and NH(3) from urea (urease route): step 1/1. This Burkholderia vietnamiensis (strain G4 / LMG 22486) (Burkholderia cepacia (strain R1808)) protein is Urease subunit beta.